Here is a 95-residue protein sequence, read N- to C-terminus: Co-chaperonin GroES (95 aa).

It belongs to the GroES chaperonin family. Heptamer of 7 subunits arranged in a ring. Interacts with the chaperonin GroEL.

It localises to the cytoplasm. Its function is as follows. Together with the chaperonin GroEL, plays an essential role in assisting protein folding. The GroEL-GroES system forms a nano-cage that allows encapsulation of the non-native substrate proteins and provides a physical environment optimized to promote and accelerate protein folding. GroES binds to the apical surface of the GroEL ring, thereby capping the opening of the GroEL channel. This Pseudoalteromonas translucida (strain TAC 125) protein is Co-chaperonin GroES.